The primary structure comprises 459 residues: Ribulose bisphosphate carboxylase (459 aa).

Position 111 (Asn111) interacts with substrate. Lys166 (proton acceptor) is an active-site residue. Lys168 provides a ligand contact to substrate. Lys191, Asp193, and Glu194 together coordinate Mg(2+). At Lys191 the chain carries N6-carboxylysine. The Proton acceptor role is filled by His287. Substrate is bound by residues Arg288, His321, and Ser368.

The protein belongs to the RuBisCO large chain family. Type II subfamily. Homodimer. Requires Mg(2+) as cofactor.

It carries out the reaction 2 (2R)-3-phosphoglycerate + 2 H(+) = D-ribulose 1,5-bisphosphate + CO2 + H2O. It catalyses the reaction D-ribulose 1,5-bisphosphate + O2 = 2-phosphoglycolate + (2R)-3-phosphoglycerate + 2 H(+). Functionally, ruBisCO catalyzes two reactions: the carboxylation of D-ribulose 1,5-bisphosphate, the primary event in carbon dioxide fixation, as well as the oxidative fragmentation of the pentose substrate. Both reactions occur simultaneously and in competition at the same active site. The chain is Ribulose bisphosphate carboxylase from Cereibacter sphaeroides (Rhodobacter sphaeroides).